The primary structure comprises 460 residues: Elongation factor 1-alpha (460 aa).

Gly-2 is modified (n,N,N-trimethylglycine). Lys-3 bears the N6,N6-dimethyllysine; alternate mark. Lys-3 is subject to N6-methyllysine; alternate. Residues 6–241 enclose the tr-type G domain; sequence KTHINVVVIG…DSIEPPKRPT (236 aa). Residues 15–22 form a G1 region; the sequence is GHVDSGKS. 15–22 is a binding site for GTP; the sequence is GHVDSGKS. Residue Lys-31 is modified to N6-methyllysine. Positions 71–75 are G2; the sequence is GITID. Lys-80 bears the N6,N6,N6-trimethyllysine mark. Residues 92-95 form a G3 region; sequence DAPG. Residues 92 to 96 and 154 to 157 each bind GTP; these read DAPGH and NKMD. Positions 154–157 are G4; sequence NKMD. A G5 region spans residues 193 to 195; sequence SGF. Lys-317 carries the N6,N6-dimethyllysine; alternate modification. N6-methyllysine; alternate is present on Lys-317. Lys-391 carries the post-translational modification N6-methyllysine.

It belongs to the TRAFAC class translation factor GTPase superfamily. Classic translation factor GTPase family. EF-Tu/EF-1A subfamily.

It localises to the cytoplasm. In terms of biological role, this protein promotes the GTP-dependent binding of aminoacyl-tRNA to the A-site of ribosomes during protein biosynthesis. The polypeptide is Elongation factor 1-alpha (TEF) (Podospora anserina (Pleurage anserina)).